The primary structure comprises 1978 residues: Dedicator of cytokinesis protein 4 (1978 aa).

In terms of domain architecture, SH3 spans Glu6 to Ala67. Tyr167 carries the phosphotyrosine modification. A Phosphothreonine modification is found at Thr193. Residues Arg401–Cys574 form the C2 DOCK-type domain. One can recognise a DOCKER domain in the interval Lys1199–Ile1605. A phosphoserine mark is found at Ser1608, Ser1616, Ser1623, Ser1627, Ser1629, and Ser1640. 2 disordered regions span residues Ser1657–Thr1738 and Ile1751–Leu1978. Residues Pro1681 to Leu1712 show a composition bias toward low complexity. The residue at position 1778 (Ser1778) is a Phosphoserine. The SH3-binding signature appears at Pro1797–Pro1803. Residues Thr1804–Pro1818 show a composition bias toward polar residues. A compositionally biased stretch (low complexity) spans Ser1842–Ser1872. A compositionally biased stretch (polar residues) spans Gly1873 to Ser1882. The segment covering Val1885–Val1895 has biased composition (pro residues). Basic and acidic residues predominate over residues Ser1953–Pro1966.

The protein belongs to the DOCK family. Interacts with nucleotide-free Rap1; functions as a guanine nucleotide exchange factor (GEF) for Rap1. Interacts (via DOCKER domain) with RAC1; functions as a guanine nucleotide exchange factor (GEF) for RAC1. Interacts with the SH3 domain of CRK. Interacts with FASLG. Interacts with ELMO2 and EPHA2; mediates activation of RAC1 by EPHA2. Interacts with USH1C (via PDZ 1 domain). In terms of tissue distribution, expressed in inner ear (at protein level).

The protein resides in the cell membrane. It is found in the cytoplasm. The protein localises to the cytosol. Functions as a guanine nucleotide exchange factor (GEF) that promotes the exchange of GDP to GTP, converting inactive GDP-bound small GTPases into their active GTP-bound form. Involved in regulation of adherens junction between cells. Plays a role in cell migration. In terms of biological role, has a higher guanine nucleotide exchange factor activity compared to other isoforms. The polypeptide is Dedicator of cytokinesis protein 4 (Dock4) (Mus musculus (Mouse)).